Here is a 401-residue protein sequence, read N- to C-terminus: Imidazolonepropionase (401 aa).

2 residues coordinate Fe(3+): H66 and H68. Positions 66 and 68 each coordinate Zn(2+). 3 residues coordinate 4-imidazolone-5-propanoate: R75, Y138, and H171. Y138 lines the N-formimidoyl-L-glutamate pocket. H236 serves as a coordination point for Fe(3+). H236 is a Zn(2+) binding site. Q239 is a binding site for 4-imidazolone-5-propanoate. A Fe(3+)-binding site is contributed by D311. Position 311 (D311) interacts with Zn(2+). Residues N313 and G315 each coordinate N-formimidoyl-L-glutamate. T316 contributes to the 4-imidazolone-5-propanoate binding site.

Belongs to the metallo-dependent hydrolases superfamily. HutI family. Zn(2+) is required as a cofactor. Requires Fe(3+) as cofactor.

Its subcellular location is the cytoplasm. It carries out the reaction 4-imidazolone-5-propanoate + H2O = N-formimidoyl-L-glutamate. The protein operates within amino-acid degradation; L-histidine degradation into L-glutamate; N-formimidoyl-L-glutamate from L-histidine: step 3/3. Catalyzes the hydrolytic cleavage of the carbon-nitrogen bond in imidazolone-5-propanoate to yield N-formimidoyl-L-glutamate. It is the third step in the universal histidine degradation pathway. This is Imidazolonepropionase from Pseudomonas putida (strain ATCC 700007 / DSM 6899 / JCM 31910 / BCRC 17059 / LMG 24140 / F1).